Consider the following 420-residue polypeptide: Serine hydroxymethyltransferase (420 aa).

(6S)-5,6,7,8-tetrahydrofolate-binding positions include L121 and 125–127 (GHL). Residue K229 is modified to N6-(pyridoxal phosphate)lysine.

This sequence belongs to the SHMT family. In terms of assembly, homodimer. The cofactor is pyridoxal 5'-phosphate.

It is found in the cytoplasm. The enzyme catalyses (6R)-5,10-methylene-5,6,7,8-tetrahydrofolate + glycine + H2O = (6S)-5,6,7,8-tetrahydrofolate + L-serine. It participates in one-carbon metabolism; tetrahydrofolate interconversion. Its pathway is amino-acid biosynthesis; glycine biosynthesis; glycine from L-serine: step 1/1. Catalyzes the reversible interconversion of serine and glycine with tetrahydrofolate (THF) serving as the one-carbon carrier. This reaction serves as the major source of one-carbon groups required for the biosynthesis of purines, thymidylate, methionine, and other important biomolecules. Also exhibits THF-independent aldolase activity toward beta-hydroxyamino acids, producing glycine and aldehydes, via a retro-aldol mechanism. This chain is Serine hydroxymethyltransferase, found in Wigglesworthia glossinidia brevipalpis.